The following is a 467-amino-acid chain: Ribulose bisphosphate carboxylase large chain (467 aa).

The propeptide occupies methionine 1–serine 2. Proline 3 is modified (N-acetylproline). The residue at position 14 (lysine 14) is an N6,N6,N6-trimethyllysine. Positions 123 and 173 each coordinate substrate. Catalysis depends on lysine 175, which acts as the Proton acceptor. Lysine 177 is a binding site for substrate. The Mg(2+) site is built by lysine 201, aspartate 203, and glutamate 204. Lysine 201 bears the N6-carboxylysine mark. Histidine 294 serves as the catalytic Proton acceptor. Arginine 295, histidine 327, and serine 379 together coordinate substrate.

This sequence belongs to the RuBisCO large chain family. Type I subfamily. Heterohexadecamer of 8 large chains and 8 small chains; disulfide-linked. The disulfide link is formed within the large subunit homodimers. Requires Mg(2+) as cofactor. The disulfide bond which can form in the large chain dimeric partners within the hexadecamer appears to be associated with oxidative stress and protein turnover.

It is found in the plastid. It localises to the chloroplast. The catalysed reaction is 2 (2R)-3-phosphoglycerate + 2 H(+) = D-ribulose 1,5-bisphosphate + CO2 + H2O. It carries out the reaction D-ribulose 1,5-bisphosphate + O2 = 2-phosphoglycolate + (2R)-3-phosphoglycerate + 2 H(+). RuBisCO catalyzes two reactions: the carboxylation of D-ribulose 1,5-bisphosphate, the primary event in carbon dioxide fixation, as well as the oxidative fragmentation of the pentose substrate in the photorespiration process. Both reactions occur simultaneously and in competition at the same active site. This is Ribulose bisphosphate carboxylase large chain from Serenoa repens (Saw palmetto).